Here is a 110-residue protein sequence, read N- to C-terminus: UPF0122 protein SH1678 (110 aa).

It belongs to the UPF0122 family.

Its function is as follows. Might take part in the signal recognition particle (SRP) pathway. This is inferred from the conservation of its genetic proximity to ftsY/ffh. May be a regulatory protein. The sequence is that of UPF0122 protein SH1678 from Staphylococcus haemolyticus (strain JCSC1435).